The primary structure comprises 110 residues: Small ribosomal subunit protein bS16 (110 aa).

The segment at 79–110 is disordered; that stretch reads AAGVKKREARNNPQKAVPRKERKAQAEAAAKG.

Belongs to the bacterial ribosomal protein bS16 family.

This Bradyrhizobium diazoefficiens (strain JCM 10833 / BCRC 13528 / IAM 13628 / NBRC 14792 / USDA 110) protein is Small ribosomal subunit protein bS16.